Here is an 883-residue protein sequence, read N- to C-terminus: Alanine--tRNA ligase (883 aa).

Zn(2+) is bound by residues H564, H568, C666, and H670.

The protein belongs to the class-II aminoacyl-tRNA synthetase family. The cofactor is Zn(2+).

The protein resides in the cytoplasm. It carries out the reaction tRNA(Ala) + L-alanine + ATP = L-alanyl-tRNA(Ala) + AMP + diphosphate. In terms of biological role, catalyzes the attachment of alanine to tRNA(Ala) in a two-step reaction: alanine is first activated by ATP to form Ala-AMP and then transferred to the acceptor end of tRNA(Ala). Also edits incorrectly charged Ser-tRNA(Ala) and Gly-tRNA(Ala) via its editing domain. The polypeptide is Alanine--tRNA ligase (Synechococcus sp. (strain JA-3-3Ab) (Cyanobacteria bacterium Yellowstone A-Prime)).